The following is a 333-amino-acid chain: PDZ domain-containing protein GIPC1 (333 aa).

A compositionally biased stretch (basic residues) spans 1-11; that stretch reads MPLGLGRRKKA. Residues 1-55 are disordered; sequence MPLGLGRRKKAPPLVENEEAEPSRSGLGVGEPGPLGGSGAGESQMGLPPPPASLR. A compositionally biased stretch (gly residues) spans 27-40; it reads LGVGEPGPLGGSGA. S68 bears the Phosphoserine mark. A PDZ domain is found at 133–213; that stretch reads EVEVFKSEDA…GRTFTLKLTE (81 aa). The disordered stretch occupies residues 221–244; sequence ISQRSSGGHPGSGPQLGTGRGTLR. 3 positions are modified to phosphoserine: S222, S225, and S232. The span at 228-240 shows a compositional bias: gly residues; it reads GHPGSGPQLGTGR. Position 242 is a phosphothreonine (T242). S247 is modified (phosphoserine).

Belongs to the GIPC family. Interacts with SDC4/syndecan-4 and SEMA4C/semaphorin-4C. Interacts with RGS19 (C-terminus), GLUT1 (C-terminus), ACTN1, KIF1B, MYO6 and PLEKHG5. Widely expressed.

The protein localises to the cytoplasm. Its subcellular location is the membrane. May be involved in G protein-linked signaling. This Rattus norvegicus (Rat) protein is PDZ domain-containing protein GIPC1 (Gipc1).